Here is a 373-residue protein sequence, read N- to C-terminus: SUN domain-containing protein 5 (373 aa).

Residues 1–103 are Nuclear-facing; sequence MPRTRNIGAL…LFCQKVMEKM (103 aa). The chain crosses the membrane as a helical span at residues 104 to 120; the sequence is GLLVLCVFGFWMFSMHL. Over 121 to 373 the chain is Perinuclear space; the sequence is PSKVEVWQDD…PKDSHLEPLS (253 aa). A coiled-coil region spans residues 136 to 180; the sequence is LQSLRMYQEKVRHHTGEIQDLRGSMNQLIAKLQKMEAISDEQKMA. An SUN domain is found at 204 to 362; that stretch reads ASIDFEHTSA…YRVRVHGSVT (159 aa).

In terms of assembly, probable homotrimer. Interacts with DNAJB13. In terms of processing, highly glycosylated in the Golgi apparatus during spermiogenesis. In terms of tissue distribution, testis-specific, abundantly expressed in spermatocytes and round spermatids.

It is found in the nucleus inner membrane. It localises to the golgi apparatus. In terms of biological role, plays an essential role in anchoring sperm head to the tail. Is responsible for the attachment of the coupling apparatus to the sperm nuclear envelope. This Mus musculus (Mouse) protein is SUN domain-containing protein 5 (Sun5).